A 953-amino-acid chain; its full sequence is MSSGLWSQEKVTSPYWEERIFYLLLQECSVTDKQTQKLLKVPKGSIGQNIQDRSVGLSRIPSAKGKKNQIGLKILEQPHAVLFVDEKDVVEINEKFTELLLAITNCEERFSLFKNRNRLSKGLQIDVGCPVKVQLRSGEEKFPGVVRFRGPLLAERTVSGIFFGVELLEEGRGQGFTDGVYQGKQLFQCDEDCGVFVALDKLELIEDDDTGLESDYAGPVDTMQVELPPLEINSRVSLKLGETIESGTVIFCDVLPGKESLGYFVGVDMDNPIGNWDGRFDGVQLCSFASVESTILLHINDIIPESVTQERRPPKLAFMSRGVGDKGSFSHNKPKATGSTSDPGTRNRSELFYTLNGSSVDSQPQSKSKNSWYIDEVAEDPAKSLTEIPPDFGHASPPLQPPSMNSLSSENRFHSLPFSLTKMPNTNGSISHSPLSLSVQSVMGELNNAPVQESPPLAVSSGNSHGLEVGSLAEVKENPPFYGVIRWIGQPPGLNEVLAGLELEDECAGCTDGTFRGTRYFTCALKKALFVKLKSCRPDSRFASLQPVSNQIERCNSLAFGGYLSEVVEENTPPKMEKEGFEIMIGKKKGIQGHYNSCYLDSTLFCLFAFSSVLDTVLLRPKEKNDVEYYSETQELLRTEIVNPLRIYGYVCATKIMKLRKILEKVEAASGFTSEEKDPEEFLNILFHHILRVEPLLKIRSAGQKVQDCYFYQIFMEKNEKVGVPTIQQLLECSFINSNLKFAEAPSCLIIQMPRFGKDFKLFKKIFPSLELNITDLLEDTPRQCRICGGLAMYECRECYDDPDISAGKIKQFCKTCNAQVHLHPKRLNHKYNPVSLPKDLPDWDWRHGCIPCQKMELFAVLCIETSHYVAFVKYGKDDSAWLFFDSMADRDGGQNGFNIPQVTPCPEVGEYLKMSLDDLHSLDSRRIQGCARRLLCDAYMCMYQSPTMSLYK.

The interaction with TRIP stretch occupies residues Cys106 to Gly590. CAP-Gly domains follow at residues Leu153–Ala198 and Asp253–Cys286. Disordered regions lie at residues Pro313–Ser349 and Ser384–Glu410. A compositionally biased stretch (polar residues) spans Thr337 to Arg346. Residues Ser384, Ser415, and Ser419 each carry the phosphoserine modification. Residues Asp391–Gly466 are interaction with TRAF2. Residues Leu467 to Glu681 form an interaction with IKBKG/NEMO region. In terms of domain architecture, CAP-Gly 3 spans Gly489–Lys532. Residues Lys589–Pro947 enclose the USP domain. Residue Cys598 is the Nucleophile of the active site. Residues Leu778–His830 are B-box. Zn(2+)-binding residues include Cys785, Cys788, Cys796, Cys799, Cys814, Cys817, His822, and His830. Catalysis depends on His868, which acts as the Proton acceptor.

The protein belongs to the peptidase C19 family. Interacts (via CAP-Gly domain) with IKBKG/NEMO (via proline-rich C-terminal region). Interacts with TRAF2 and TRIP. Interacts with PLK1, DVL1, DVL3, MAVS, TBK1, IKKE and RIGI. Interacts (via CAP-Gly domain) with microtubules. Interacts with HDAC6 and BCL3. Interacts with MAP3K7. Identified in a complex with TRAF6 and SQSTM1. Interacts with OPTN and SQSTM1. Interacts with CEP350. Interacts with RNF31; the interaction is indirect and is mediated via SPATA2. Interacts with SPATA2 (via the PUB domain); the interaction is direct and recruits CYLD to the LUBAC complex, thereby regulating TNF-alpha-induced necroptosis. In terms of processing, phosphorylated on several serine residues by IKKA and/or IKKB in response to immune stimuli. Phosphorylation requires IKBKG. Phosphorylation abolishes TRAF2 deubiquitination, interferes with the activation of Jun kinases, and strongly reduces CD40-dependent gene activation by NF-kappa-B. Post-translationally, ubiquitinated. Polyubiquitinated in hepatocytes treated with palmitic acid. Ubiquitination is mediated by E3 ligase TRIM47 and leads to proteasomal degradation.

The protein localises to the cytoplasm. It is found in the perinuclear region. It localises to the cytoskeleton. Its subcellular location is the cell membrane. The protein resides in the microtubule organizing center. The protein localises to the centrosome. It is found in the spindle. It localises to the cilium basal body. It catalyses the reaction Thiol-dependent hydrolysis of ester, thioester, amide, peptide and isopeptide bonds formed by the C-terminal Gly of ubiquitin (a 76-residue protein attached to proteins as an intracellular targeting signal).. In terms of biological role, deubiquitinase that specifically cleaves 'Lys-63'- and linear 'Met-1'-linked polyubiquitin chains and is involved in NF-kappa-B activation and TNF-alpha-induced necroptosis. Negatively regulates NF-kappa-B activation by deubiquitinating upstream signaling factors. Contributes to the regulation of cell survival, proliferation and differentiation via its effects on NF-kappa-B activation. Negative regulator of Wnt signaling. Inhibits HDAC6 and thereby promotes acetylation of alpha-tubulin and stabilization of microtubules. Plays a role in the regulation of microtubule dynamics, and thereby contributes to the regulation of cell proliferation, cell polarization, cell migration, and angiogenesis. Required for normal cell cycle progress and normal cytokinesis. Inhibits nuclear translocation of NF-kappa-B. Plays a role in the regulation of inflammation and the innate immune response, via its effects on NF-kappa-B activation. Dispensable for the maturation of intrathymic natural killer cells, but required for the continued survival of immature natural killer cells. Negatively regulates TNFRSF11A signaling and osteoclastogenesis. Involved in the regulation of ciliogenesis, allowing ciliary basal bodies to migrate and dock to the plasma membrane; this process does not depend on NF-kappa-B activation. Ability to remove linear ('Met-1'-linked) polyubiquitin chains regulates innate immunity and TNF-alpha-induced necroptosis: recruited to the LUBAC complex via interaction with SPATA2 and restricts linear polyubiquitin formation on target proteins. Regulates innate immunity by restricting linear polyubiquitin formation on RIPK2 in response to NOD2 stimulation. Involved in TNF-alpha-induced necroptosis by removing linear ('Met-1'-linked) polyubiquitin chains from RIPK1, thereby regulating the kinase activity of RIPK1. Negatively regulates intestinal inflammation by removing 'Lys-63' linked polyubiquitin chain of NLRP6, thereby reducing the interaction between NLRP6 and PYCARD/ASC and formation of the NLRP6 inflammasome. Does not catalyze deubiquitination of heterotypic 'Lys-63'-/'Lys-48'-linked branched ubiquitin chains. Removes 'Lys-63' linked polyubiquitin chain of MAP3K7, which inhibits phosphorylation and blocks downstream activation of the JNK-p38 kinase cascades. Also removes 'Lys-63'-linked polyubiquitin chains of MAP3K1 and MA3P3K3, which inhibit their interaction with MAP2K1 and MAP2K2. The polypeptide is Ubiquitin carboxyl-terminal hydrolase CYLD (CYLD) (Bos taurus (Bovine)).